The primary structure comprises 313 residues: Porphobilinogen deaminase (313 aa).

The residue at position 242 (Cys-242) is an S-(dipyrrolylmethanemethyl)cysteine.

It belongs to the HMBS family. As to quaternary structure, monomer. It depends on dipyrromethane as a cofactor.

The enzyme catalyses 4 porphobilinogen + H2O = hydroxymethylbilane + 4 NH4(+). Its pathway is porphyrin-containing compound metabolism; protoporphyrin-IX biosynthesis; coproporphyrinogen-III from 5-aminolevulinate: step 2/4. Its function is as follows. Tetrapolymerization of the monopyrrole PBG into the hydroxymethylbilane pre-uroporphyrinogen in several discrete steps. The polypeptide is Porphobilinogen deaminase (Pseudomonas aeruginosa (strain UCBPP-PA14)).